The sequence spans 588 residues: L-fucose isomerase (588 aa).

Residues Glu335 and Asp359 each act as proton acceptor in the active site. Glu335, Asp359, and His525 together coordinate Mn(2+).

Belongs to the L-fucose isomerase family. Mn(2+) serves as cofactor.

The protein localises to the cytoplasm. It catalyses the reaction L-fucose = L-fuculose. Its pathway is carbohydrate degradation; L-fucose degradation; L-lactaldehyde and glycerone phosphate from L-fucose: step 1/3. Functionally, converts the aldose L-fucose into the corresponding ketose L-fuculose. The chain is L-fucose isomerase from Streptococcus pneumoniae (strain 70585).